Consider the following 175-residue polypeptide: MFFGERFFTTAMAKVSNKANKIIKKEAVFKRLSENRYAKFQYEILETIEAGIELLGTEVKSIRNGSVNLRDGYCSFRDGEILLLNVHISPHKNVGPFFNHDPLRNRKLLLHKKEIVKLKYNTEKKGLTIIPLSIYLKGSWIKLTIGIGKGKKLHDKRQADKQRDIKREIKTALKR.

The protein belongs to the SmpB family.

The protein resides in the cytoplasm. Its function is as follows. Required for rescue of stalled ribosomes mediated by trans-translation. Binds to transfer-messenger RNA (tmRNA), required for stable association of tmRNA with ribosomes. tmRNA and SmpB together mimic tRNA shape, replacing the anticodon stem-loop with SmpB. tmRNA is encoded by the ssrA gene; the 2 termini fold to resemble tRNA(Ala) and it encodes a 'tag peptide', a short internal open reading frame. During trans-translation Ala-aminoacylated tmRNA acts like a tRNA, entering the A-site of stalled ribosomes, displacing the stalled mRNA. The ribosome then switches to translate the ORF on the tmRNA; the nascent peptide is terminated with the 'tag peptide' encoded by the tmRNA and targeted for degradation. The ribosome is freed to recommence translation, which seems to be the essential function of trans-translation. The chain is SsrA-binding protein from Prochlorococcus marinus subsp. pastoris (strain CCMP1986 / NIES-2087 / MED4).